A 249-amino-acid chain; its full sequence is MITVKNIRKAFKDLVVLDGIDLEVKRGEVVAIIGPSGSGKSTLLRCLNLLERPDQGLIEIGEAKLNAEKFTRKEAHRLRQQTAMVFQNYNLFKNKTALQNITEALIVAQHKPRDEAKRIGMEILKQVGLEHKADSYPITMSGGQQQRIGIARALAVNPHAILLDEPTSALDPELVTGVLQVIKSIAEKQTTMIIVTHEMAFAKEVADQVIFMADGHIIEQGTPEELFDHPKNERTKRFIKQVGEPAELI.

The ABC transporter domain maps to 2–239; sequence ITVKNIRKAF…PKNERTKRFI (238 aa). 34–41 serves as a coordination point for ATP; that stretch reads GPSGSGKS.

Belongs to the ABC transporter superfamily. In terms of assembly, the complex is composed of two ATP-binding proteins (YxeO), two transmembrane proteins (YxeN) and a solute-binding protein (YxeM).

It localises to the cell membrane. Functionally, probably part of the ABC transporter complex YxeMNO that could be involved in amino-acid import. May transport S-methylcysteine. Responsible for energy coupling to the transport system. In Bacillus subtilis (strain 168), this protein is Probable amino-acid import ATP-binding protein YxeO (yxeO).